The sequence spans 444 residues: MAQFFKAAPTNSIKNHILKNIKVEKLDHRGRGLAYFQNKPLFIDGALAGELLEVQIVESKKRYSKGKIKKIIKASELRITAACPHYQECGGCDLQHLNQAAQIQIKSDGLLSLFQRFAKKVPQQLEKPIIDKAWEYRRTARFGLQFDKKNKQLKMGLRRAQSNELIDQKVCPVLLPELECLIPPLKILLNSLQCKAHLGHVELLYADQGAVVLLRHMKTLTSPDLQLITAFSALQKVNFFGQASSNQSVCLAGEANLSYRLPEWDCSLSFTPTDFLQVNSDINKKMVSQAMQWLALEKNDSVLDLFCGLGNFTLPIARQVESVVGIEGVQQMVDRATANAQLNNLQNARFYQADLSGENLIEQEWANQNFNKVLLDPARAGALDCLAFIAQKKPSHILYVSCDPLTLARDSQVLLDKGYKLDKLGLLDMFPQTAHMESMALFTG.

In terms of domain architecture, TRAM spans 11–70 (NSIKNHILKNIKVEKLDHRGRGLAYFQNKPLFIDGALAGELLEVQIVESKKRYSKGKIKK). 4 residues coordinate [4Fe-4S] cluster: Cys-83, Cys-89, Cys-92, and Cys-171. Gln-277, Phe-306, Asn-311, Glu-327, Asp-354, and Asp-376 together coordinate S-adenosyl-L-methionine. Cys-402 functions as the Nucleophile in the catalytic mechanism.

It belongs to the class I-like SAM-binding methyltransferase superfamily. RNA M5U methyltransferase family. RlmD subfamily.

It carries out the reaction uridine(1939) in 23S rRNA + S-adenosyl-L-methionine = 5-methyluridine(1939) in 23S rRNA + S-adenosyl-L-homocysteine + H(+). Its function is as follows. Catalyzes the formation of 5-methyl-uridine at position 1939 (m5U1939) in 23S rRNA. In Psychromonas ingrahamii (strain DSM 17664 / CCUG 51855 / 37), this protein is 23S rRNA (uracil(1939)-C(5))-methyltransferase RlmD.